Consider the following 718-residue polypeptide: Kinesin-like protein KIF2C (718 aa).

Residues 1-248 (MESLPARLFP…CHPLTLTDPT (248 aa)) are globular. Phosphoserine is present on residues Ser3 and Ser19. Positions 86-111 (PKQKRRSVNSKIPAPKEGLRSRSTRM) are disordered. Ser92 carries the post-translational modification Phosphoserine; by AURKB. A Microtubule tip localization signal motif is present at residues 95-98 (SKIP). Ser106, Ser108, Ser112, Ser163, and Ser186 each carry phosphoserine. A negative regulator of microtubule-binding region spans residues 201 to 232 (EKRAQNSEIRIKRAQEYDSSFPNWEFARMIKE). The Kinesin motor domain maps to 252–582 (RICVCVRKRP…LRYADRVKEL (331 aa)). Residues Arg258 and 342 to 349 (GQTGSGKT) contribute to the ATP site. A Nuclear localization signal motif is present at residues 409–412 (KKAK). Ser513 and Ser626 each carry phosphoserine. Coiled-coil stretches lie at residues 613-651 (NFKE…IIQQ) and 689-716 (ALRE…SKKR).

The protein belongs to the TRAFAC class myosin-kinesin ATPase superfamily. Kinesin family. MCAK/KIF2 subfamily. As to quaternary structure, interacts with CENPH. Interacts with MTUS2/TIP150; the interaction is direct. Interacts with MAPRE1; the interaction is direct, regulated by phosphorylation and is probably required for targeting to growing microtubule plus ends. Interacts with KIF18B at microtubule tips; this interaction increases the affinity of both partners for microtubule plus ends and is required for robust microtubule depolymerization. Phosphorylation by AURKA or AURKB strongly reduces KIF18B-binding. In terms of processing, phosphorylation by AURKB, regulates association with centromeres and kinetochores and the microtubule depolymerization activity. Post-translationally, ubiquitinated.

The protein resides in the cytoplasm. Its subcellular location is the cytoskeleton. It is found in the nucleus. The protein localises to the chromosome. It localises to the centromere. The protein resides in the kinetochore. In complex with KIF18B, constitutes the major microtubule plus-end depolymerizing activity in mitotic cells. Regulates the turnover of microtubules at the kinetochore and functions in chromosome segregation during mitosis. Plays a role in chromosome congression and is required for the lateral to end-on conversion of the chromosome-microtubule attachment. The protein is Kinesin-like protein KIF2C (KIF2C) of Cricetulus griseus (Chinese hamster).